Here is a 341-residue protein sequence, read N- to C-terminus: S-adenosylmethionine:tRNA ribosyltransferase-isomerase (341 aa).

The protein belongs to the QueA family. As to quaternary structure, monomer.

It is found in the cytoplasm. It carries out the reaction 7-aminomethyl-7-carbaguanosine(34) in tRNA + S-adenosyl-L-methionine = epoxyqueuosine(34) in tRNA + adenine + L-methionine + 2 H(+). The protein operates within tRNA modification; tRNA-queuosine biosynthesis. Its function is as follows. Transfers and isomerizes the ribose moiety from AdoMet to the 7-aminomethyl group of 7-deazaguanine (preQ1-tRNA) to give epoxyqueuosine (oQ-tRNA). The sequence is that of S-adenosylmethionine:tRNA ribosyltransferase-isomerase from Clostridium botulinum (strain Eklund 17B / Type B).